The sequence spans 253 residues: Succinate dehydrogenase iron-sulfur subunit (253 aa).

Residues Cys-64, Cys-69, and Cys-84 each coordinate [2Fe-2S] cluster. The 29-residue stretch at 146 to 174 (RQWAYELSKCMTCGVCLEACPNVNSKSKF) folds into the 4Fe-4S ferredoxin-type domain. 3 residues coordinate [4Fe-4S] cluster: Cys-155, Cys-158, and Cys-161. Residues Cys-165, Cys-212, and Cys-218 each coordinate [3Fe-4S] cluster. Cys-222 contacts [4Fe-4S] cluster.

It belongs to the succinate dehydrogenase/fumarate reductase iron-sulfur protein family. As to quaternary structure, in B.subtilis succinate dehydrogenase forms part of an enzyme complex containing three subunits: a flavoprotein, an iron-sulfur protein and cytochrome b-558. The cofactor is [2Fe-2S] cluster. It depends on [3Fe-4S] cluster as a cofactor. [4Fe-4S] cluster is required as a cofactor.

It catalyses the reaction a quinone + succinate = fumarate + a quinol. It participates in carbohydrate metabolism; tricarboxylic acid cycle; fumarate from succinate (bacterial route): step 1/1. The protein is Succinate dehydrogenase iron-sulfur subunit (sdhB) of Bacillus subtilis (strain 168).